Reading from the N-terminus, the 319-residue chain is Coiled-coil domain-containing protein 149 (319 aa).

2 coiled-coil regions span residues 1–199 and 259–286; these read MANQ…RKNS and IQHQRQTNKILGNRVAELEKKLRTLEVS. The helical transmembrane segment at 298–318 threads the bilayer; that stretch reads VSIGFGSMFFLKYLCLWLIAV.

This sequence belongs to the CCDC149 family.

The protein localises to the membrane. The protein is Coiled-coil domain-containing protein 149 (CCDC149) of Bos taurus (Bovine).